Consider the following 150-residue polypeptide: Cytochrome c oxidase subunit 5A, mitochondrial (150 aa).

A mitochondrion-targeting transit peptide spans 1-41 (MLGAALRRCAVAATTRAGPRGLLHSARTPGPAAAIQSVRCX). An SIFI-degron motif is present at residues 2–17 (LGAALRRCAVAATTRA). Residues K87 and K113 each carry the N6-acetyllysine modification. T141 carries the post-translational modification Phosphothreonine.

The protein belongs to the cytochrome c oxidase subunit 5A family. In terms of assembly, component of the cytochrome c oxidase (complex IV, CIV), a multisubunit enzyme composed of 14 subunits. The complex is composed of a catalytic core of 3 subunits MT-CO1, MT-CO2 and MT-CO3, encoded in the mitochondrial DNA, and 11 supernumerary subunits COX4I, COX5A, COX5B, COX6A, COX6B, COX6C, COX7A, COX7B, COX7C, COX8 and NDUFA4, which are encoded in the nuclear genome. The complex exists as a monomer or a dimer and forms supercomplexes (SCs) in the inner mitochondrial membrane with NADH-ubiquinone oxidoreductase (complex I, CI) and ubiquinol-cytochrome c oxidoreductase (cytochrome b-c1 complex, complex III, CIII), resulting in different assemblies (supercomplex SCI(1)III(2)IV(1) and megacomplex MCI(2)III(2)IV(2)). Interacts with AFG1L. Interacts with RAB5IF. In terms of processing, in response to mitochondrial stress, the precursor protein is ubiquitinated by the SIFI complex in the cytoplasm before mitochondrial import, leading to its degradation. Within the SIFI complex, UBR4 initiates ubiquitin chain that are further elongated or branched by KCMF1.

The protein resides in the mitochondrion inner membrane. It functions in the pathway energy metabolism; oxidative phosphorylation. In terms of biological role, component of the cytochrome c oxidase, the last enzyme in the mitochondrial electron transport chain which drives oxidative phosphorylation. The respiratory chain contains 3 multisubunit complexes succinate dehydrogenase (complex II, CII), ubiquinol-cytochrome c oxidoreductase (cytochrome b-c1 complex, complex III, CIII) and cytochrome c oxidase (complex IV, CIV), that cooperate to transfer electrons derived from NADH and succinate to molecular oxygen, creating an electrochemical gradient over the inner membrane that drives transmembrane transport and the ATP synthase. Cytochrome c oxidase is the component of the respiratory chain that catalyzes the reduction of oxygen to water. Electrons originating from reduced cytochrome c in the intermembrane space (IMS) are transferred via the dinuclear copper A center (CU(A)) of subunit 2 and heme A of subunit 1 to the active site in subunit 1, a binuclear center (BNC) formed by heme A3 and copper B (CU(B)). The BNC reduces molecular oxygen to 2 water molecules using 4 electrons from cytochrome c in the IMS and 4 protons from the mitochondrial matrix. This is Cytochrome c oxidase subunit 5A, mitochondrial (COX5A) from Pan paniscus (Pygmy chimpanzee).